Consider the following 395-residue polypeptide: Elongation factor Tu (395 aa).

The tr-type G domain maps to 10-205; it reads KPHVNVGTIG…VDNDIPIPPR (196 aa). The interval 19–26 is G1; it reads GHVDHGKT. A GTP-binding site is contributed by 19–26; that stretch reads GHVDHGKT. Thr26 contributes to the Mg(2+) binding site. The tract at residues 60 to 64 is G2; the sequence is GITIN. A G3 region spans residues 81–84; that stretch reads DCPG. Residues 81 to 85 and 136 to 139 each bind GTP; these read DCPGH and NKVD. Residues 136–139 are G4; it reads NKVD. The segment at 174-176 is G5; that stretch reads SAL.

Belongs to the TRAFAC class translation factor GTPase superfamily. Classic translation factor GTPase family. EF-Tu/EF-1A subfamily. Monomer.

The protein resides in the cytoplasm. It catalyses the reaction GTP + H2O = GDP + phosphate + H(+). Its function is as follows. GTP hydrolase that promotes the GTP-dependent binding of aminoacyl-tRNA to the A-site of ribosomes during protein biosynthesis. In Cytophaga hutchinsonii (strain ATCC 33406 / DSM 1761 / CIP 103989 / NBRC 15051 / NCIMB 9469 / D465), this protein is Elongation factor Tu.